A 485-amino-acid polypeptide reads, in one-letter code: tRNA-2-methylthio-N(6)-dimethylallyladenosine synthase (485 aa).

The MTTase N-terminal domain maps to 37 to 154 (GKLYIKTHGC…LPELIRARRE (118 aa)). C46, C83, C117, C191, C195, and C198 together coordinate [4Fe-4S] cluster. Residues 177–416 (RADGPSAFVS…HINAHAAGIS (240 aa)) enclose the Radical SAM core domain. Positions 417-480 (QRMVGSVQRV…SNSLRGRIQL (64 aa)) constitute a TRAM domain.

This sequence belongs to the methylthiotransferase family. MiaB subfamily. As to quaternary structure, monomer. It depends on [4Fe-4S] cluster as a cofactor.

Its subcellular location is the cytoplasm. It catalyses the reaction N(6)-dimethylallyladenosine(37) in tRNA + (sulfur carrier)-SH + AH2 + 2 S-adenosyl-L-methionine = 2-methylsulfanyl-N(6)-dimethylallyladenosine(37) in tRNA + (sulfur carrier)-H + 5'-deoxyadenosine + L-methionine + A + S-adenosyl-L-homocysteine + 2 H(+). Functionally, catalyzes the methylthiolation of N6-(dimethylallyl)adenosine (i(6)A), leading to the formation of 2-methylthio-N6-(dimethylallyl)adenosine (ms(2)i(6)A) at position 37 in tRNAs that read codons beginning with uridine. The sequence is that of tRNA-2-methylthio-N(6)-dimethylallyladenosine synthase from Xanthomonas campestris pv. campestris (strain 8004).